The chain runs to 358 residues: D-xylulose reductase A (358 aa).

Zn(2+) is bound by residues C47, H72, and E73. An NAD(+)-binding site is contributed by G182–G187.

The protein belongs to the zinc-containing alcohol dehydrogenase family. Zn(2+) is required as a cofactor.

It carries out the reaction xylitol + NAD(+) = D-xylulose + NADH + H(+). It participates in carbohydrate degradation; L-arabinose degradation via L-arabinitol; D-xylulose 5-phosphate from L-arabinose (fungal route): step 4/5. Functionally, xylitol dehydrogenase which catalyzes the conversion of xylitol to D-xylulose. Xylose is a major component of hemicelluloses such as xylan. Most fungi utilize D-xylose via three enzymatic reactions, xylose reductase (XR), xylitol dehydrogenase (XDH), and xylulokinase, to form xylulose 5-phosphate, which enters pentose phosphate pathway. This Aspergillus oryzae (strain ATCC 42149 / RIB 40) (Yellow koji mold) protein is D-xylulose reductase A (xdhA).